A 104-amino-acid chain; its full sequence is Pyrimidine/purine nucleoside phosphorylase (104 aa).

Belongs to the nucleoside phosphorylase PpnP family.

The catalysed reaction is a purine D-ribonucleoside + phosphate = a purine nucleobase + alpha-D-ribose 1-phosphate. It carries out the reaction adenosine + phosphate = alpha-D-ribose 1-phosphate + adenine. It catalyses the reaction cytidine + phosphate = cytosine + alpha-D-ribose 1-phosphate. The enzyme catalyses guanosine + phosphate = alpha-D-ribose 1-phosphate + guanine. The catalysed reaction is inosine + phosphate = alpha-D-ribose 1-phosphate + hypoxanthine. It carries out the reaction thymidine + phosphate = 2-deoxy-alpha-D-ribose 1-phosphate + thymine. It catalyses the reaction uridine + phosphate = alpha-D-ribose 1-phosphate + uracil. The enzyme catalyses xanthosine + phosphate = alpha-D-ribose 1-phosphate + xanthine. Functionally, catalyzes the phosphorolysis of diverse nucleosides, yielding D-ribose 1-phosphate and the respective free bases. Can use uridine, adenosine, guanosine, cytidine, thymidine, inosine and xanthosine as substrates. Also catalyzes the reverse reactions. The sequence is that of Pyrimidine/purine nucleoside phosphorylase from Hydrogenovibrio crunogenus (strain DSM 25203 / XCL-2) (Thiomicrospira crunogena).